The sequence spans 222 residues: Large ribosomal subunit protein uL1 (222 aa).

Belongs to the universal ribosomal protein uL1 family. In terms of assembly, part of the 50S ribosomal subunit.

Functionally, binds directly to 23S rRNA. Probably involved in E site tRNA release. In terms of biological role, protein L1 is also a translational repressor protein, it controls the translation of its operon by binding to its mRNA. The protein is Large ribosomal subunit protein uL1 of Pyrobaculum aerophilum (strain ATCC 51768 / DSM 7523 / JCM 9630 / CIP 104966 / NBRC 100827 / IM2).